A 687-amino-acid chain; its full sequence is Glycine--tRNA ligase beta subunit (687 aa).

This sequence belongs to the class-II aminoacyl-tRNA synthetase family. In terms of assembly, tetramer of two alpha and two beta subunits.

The protein resides in the cytoplasm. It carries out the reaction tRNA(Gly) + glycine + ATP = glycyl-tRNA(Gly) + AMP + diphosphate. The protein is Glycine--tRNA ligase beta subunit of Neisseria meningitidis serogroup C / serotype 2a (strain ATCC 700532 / DSM 15464 / FAM18).